The sequence spans 98 residues: Large ribosomal subunit protein uL23 (98 aa).

It belongs to the universal ribosomal protein uL23 family. As to quaternary structure, part of the 50S ribosomal subunit. Contacts protein L29, and trigger factor when it is bound to the ribosome.

One of the early assembly proteins it binds 23S rRNA. One of the proteins that surrounds the polypeptide exit tunnel on the outside of the ribosome. Forms the main docking site for trigger factor binding to the ribosome. This chain is Large ribosomal subunit protein uL23, found in Rickettsia felis (strain ATCC VR-1525 / URRWXCal2) (Rickettsia azadi).